The chain runs to 441 residues: UBX domain-containing protein 6 (441 aa).

The mediates interaction with LMAN1 stretch occupies residues 1-10 (MKKFFQEFKA). Lysine 2 is modified (N-acetylalanine). Disordered stretches follow at residues 13-79 (KFKS…QDTI) and 87-106 (LQAE…NVVS). Basic and acidic residues predominate over residues 22 to 36 (KLKESVGEKAHKEKP). The segment at 51–63 (EAQMAAAAALARL) is VCP/p97-interacting motif (VIM). A compositionally biased stretch (low complexity) spans 52 to 61 (AQMAAAAALA). Serine 96 carries the phosphoserine modification. In terms of domain architecture, PUB spans 175–244 (VDTIAKYLDN…DPEEFYVLSE (70 aa)). Residues 332 to 408 (RKYNYTLLRV…GLVPSALLTF (77 aa)) enclose the UBX domain.

Interacts with VCP through the PUB domain (via C-terminus) and VIM motif (via N-terminus); the interaction is direct. Forms a ternary complex with CAV1 and VCP. Interacts with SYVN1. Interacts with HERPUD1. Interacts with VCPKMT. May interact with DERL1. Interacts with PLAA, VCP and YOD1; may form a complex involved in macroautophagy. Interacts with LMAN1. As to expression, enhanced expression in testis.

The protein localises to the cytoplasm. It localises to the cytosol. Its subcellular location is the membrane. The protein resides in the nucleus. It is found in the cytoskeleton. The protein localises to the microtubule organizing center. It localises to the centrosome. Its subcellular location is the early endosome membrane. The protein resides in the late endosome membrane. It is found in the lysosome membrane. Functionally, may negatively regulate the ATPase activity of VCP, an ATP-driven segregase that associates with different cofactors to control a wide variety of cellular processes. As a cofactor of VCP, it may play a role in the transport of CAV1 to lysosomes for degradation. It may also play a role in endoplasmic reticulum-associated degradation (ERAD) of misfolded proteins. Together with VCP and other cofactors, it may play a role in macroautophagy, regulating for instance the clearance of damaged lysosomes. The protein is UBX domain-containing protein 6 of Homo sapiens (Human).